Reading from the N-terminus, the 580-residue chain is Glutamine--tRNA ligase (580 aa).

The 'HIGH' region motif lies at 41 to 51; the sequence is PEPNGYLHIGH. ATP contacts are provided by residues 42-44 and 48-54; these read EPN and HIGHAKA. L-glutamine contacts are provided by Asp74 and Tyr218. Residues Thr237, 285–286, and 293–295 contribute to the ATP site; these read RL and MSK. A 'KMSKS' region motif is present at residues 292 to 296; that stretch reads VMSKR.

This sequence belongs to the class-I aminoacyl-tRNA synthetase family. In terms of assembly, monomer.

The protein localises to the cytoplasm. It carries out the reaction tRNA(Gln) + L-glutamine + ATP = L-glutaminyl-tRNA(Gln) + AMP + diphosphate. In Xylella fastidiosa (strain M12), this protein is Glutamine--tRNA ligase.